The sequence spans 478 residues: Alpha-1,3-mannosyl-glycoprotein 4-beta-N-acetylglucosaminyltransferase C (478 aa).

Over 1–25 (MLKFYQMKYIFQILDKMRCLRKRST) the chain is Cytoplasmic. The chain crosses the membrane as a helical; Signal-anchor for type II membrane protein span at residues 26-43 (VSFLGVLVVFLLFMNLYI). Over 44–478 (EDSYVLEGDK…IIRSISIWTS (435 aa)) the chain is Lumenal. Residues Asn84 and Asn215 are each glycosylated (N-linked (GlcNAc...) asparagine).

This sequence belongs to the glycosyltransferase 54 family. The cofactor is a divalent metal cation.

It is found in the golgi apparatus membrane. It catalyses the reaction N(4)-{beta-D-GlcNAc-(1-&gt;2)-alpha-D-Man-(1-&gt;3)-[beta-D-GlcNAc-(1-&gt;2)-alpha-D-Man-(1-&gt;6)]-beta-D-Man-(1-&gt;4)-beta-D-GlcNAc-(1-&gt;4)-beta-D-GlcNAc}-L-asparaginyl-[protein] + UDP-N-acetyl-alpha-D-glucosamine = N(4)-{beta-D-GlcNAc-(1-&gt;2)-[beta-D-GlcNAc-(1-&gt;4)]-alpha-D-Man-(1-&gt;3)-[beta-D-GlcNAc-(1-&gt;2)-alpha-D-Man-(1-&gt;6)]-beta-D-Man-(1-&gt;4)-beta-D-GlcNAc-(1-&gt;4)-beta-D-GlcNAc}-L-asparaginyl-[protein] + UDP + H(+). The protein operates within protein modification; protein glycosylation. Glycosyltransferase that participates in the transfer of N-acetylglucosamine (GlcNAc) to the core mannose residues of N-linked glycans. Catalyzes the formation of the GlcNAcbeta1-4 branch on the GlcNAcbeta1-2Manalpha1-3 arm of the core structure of N-linked glycans. Essential for the production of tri- and tetra-antennary N-linked sugar chains. Does not catalyze the transfer of GlcNAc to the Manalpha1-6 arm to form GlcNAcBeta1-4Manalpha1-6 linkage ('GnT-VI' activity). In Mus musculus (Mouse), this protein is Alpha-1,3-mannosyl-glycoprotein 4-beta-N-acetylglucosaminyltransferase C (Mgat4c).